Reading from the N-terminus, the 236-residue chain is Pyridoxine 5'-phosphate synthase (236 aa).

N6 is a 3-amino-2-oxopropyl phosphate binding site. 1-deoxy-D-xylulose 5-phosphate is bound at residue 8–9; the sequence is DH. R17 is a binding site for 3-amino-2-oxopropyl phosphate. H42 serves as the catalytic Proton acceptor. 1-deoxy-D-xylulose 5-phosphate-binding residues include R44 and H49. Residue E69 is the Proton acceptor of the active site. T99 is a 1-deoxy-D-xylulose 5-phosphate binding site. The active-site Proton donor is the H190. 3-amino-2-oxopropyl phosphate-binding positions include G191 and 212–213; that span reads GH.

This sequence belongs to the PNP synthase family. As to quaternary structure, homooctamer; tetramer of dimers.

It localises to the cytoplasm. The enzyme catalyses 3-amino-2-oxopropyl phosphate + 1-deoxy-D-xylulose 5-phosphate = pyridoxine 5'-phosphate + phosphate + 2 H2O + H(+). The protein operates within cofactor biosynthesis; pyridoxine 5'-phosphate biosynthesis; pyridoxine 5'-phosphate from D-erythrose 4-phosphate: step 5/5. Catalyzes the complicated ring closure reaction between the two acyclic compounds 1-deoxy-D-xylulose-5-phosphate (DXP) and 3-amino-2-oxopropyl phosphate (1-amino-acetone-3-phosphate or AAP) to form pyridoxine 5'-phosphate (PNP) and inorganic phosphate. The protein is Pyridoxine 5'-phosphate synthase of Chlorobium phaeobacteroides (strain DSM 266 / SMG 266 / 2430).